We begin with the raw amino-acid sequence, 347 residues long: NADH-ubiquinone oxidoreductase chain 2 (347 aa).

A run of 9 helical transmembrane segments spans residues 5 to 22, 26 to 45, 60 to 80, 150 to 170, 178 to 198, 200 to 220, 242 to 262, 274 to 294, and 324 to 344; these read ILTI…MVLI, WLTV…PILM, FLTQ…NLLL, NPNL…WGGL, ILAY…TYNP, LMML…MLFM, SLIL…GFIP, NMII…YFYM, and TLLP…PMML.

The protein belongs to the complex I subunit 2 family. Core subunit of respiratory chain NADH dehydrogenase (Complex I) which is composed of 45 different subunits. Interacts with TMEM242.

It is found in the mitochondrion inner membrane. The catalysed reaction is a ubiquinone + NADH + 5 H(+)(in) = a ubiquinol + NAD(+) + 4 H(+)(out). Functionally, core subunit of the mitochondrial membrane respiratory chain NADH dehydrogenase (Complex I) which catalyzes electron transfer from NADH through the respiratory chain, using ubiquinone as an electron acceptor. Essential for the catalytic activity and assembly of complex I. This chain is NADH-ubiquinone oxidoreductase chain 2, found in Martes flavigula (Yellow-throated marten).